The following is a 591-amino-acid chain: Aspartate--tRNA ligase (591 aa).

Residue glutamate 171 participates in L-aspartate binding. The tract at residues 195-198 (QLFK) is aspartate. Position 217 (arginine 217) interacts with L-aspartate. ATP contacts are provided by residues 217-219 (RDE) and glutamine 226. Histidine 448 is an L-aspartate binding site. Glutamate 482 is a binding site for ATP. Arginine 489 is an L-aspartate binding site. Position 534–537 (534–537 (GLDR)) interacts with ATP.

Belongs to the class-II aminoacyl-tRNA synthetase family. Type 1 subfamily. As to quaternary structure, homodimer.

It localises to the cytoplasm. It carries out the reaction tRNA(Asp) + L-aspartate + ATP = L-aspartyl-tRNA(Asp) + AMP + diphosphate. Catalyzes the attachment of L-aspartate to tRNA(Asp) in a two-step reaction: L-aspartate is first activated by ATP to form Asp-AMP and then transferred to the acceptor end of tRNA(Asp). This chain is Aspartate--tRNA ligase, found in Edwardsiella ictaluri (strain 93-146).